A 66-amino-acid polypeptide reads, in one-letter code: MTGLSMDGGGSPKGDVDPFYYDYETVRNGGLIFAGLAFIVGLLILLSRRFRCGGNKKRRQINEDEP.

The helical transmembrane segment at 29–46 (GGLIFAGLAFIVGLLILL) threads the bilayer.

It belongs to the FXYD family. Regulatory subunit of the sodium/potassium-transporting ATPase which is composed of a catalytic alpha subunit, an auxiliary non-catalytic beta subunit and an additional regulatory subunit. As to expression, expressed in the distal convoluted tubule in the kidney. Found on basolateral membranes of nephron epithelial cells.

It localises to the membrane. May be involved in forming the receptor site for cardiac glycoside binding or may modulate the transport function of the sodium ATPase. In Homo sapiens (Human), this protein is Sodium/potassium-transporting ATPase subunit gamma (FXYD2).